Here is a 379-residue protein sequence, read N- to C-terminus: Alcohol dehydrogenase class-P (379 aa).

Position 2 is an N-acetylserine (S2). Position 47 (C47) interacts with Zn(2+). T49 contributes to the an alcohol binding site. An NAD(+)-binding site is contributed by T49. Positions 50, 69, 70, 99, 102, 105, 113, and 177 each coordinate Zn(2+). H69 lines the an alcohol pocket. NAD(+)-binding residues include V206 and D226. S229 carries the post-translational modification Phosphoserine. NAD(+)-binding residues include R231, T272, V295, V297, T320, F322, and R372.

Belongs to the zinc-containing alcohol dehydrogenase family. Class-P subfamily. Homodimer. Zn(2+) serves as cofactor. Post-translationally, glutathionylated. In terms of tissue distribution, root specific. Also detected in etiolated seedlings and leaves in cold conditions.

The protein resides in the cytoplasm. The catalysed reaction is a primary alcohol + NAD(+) = an aldehyde + NADH + H(+). The enzyme catalyses a secondary alcohol + NAD(+) = a ketone + NADH + H(+). It carries out the reaction ethanol + NAD(+) = acetaldehyde + NADH + H(+). Its activity is regulated as follows. Alcohol dehydrogenase activity show inverse correlation with the decreasing availability of oxygen. Slightly repressed by thiol-modifying agents N-ethylmaleimide (NEM) and 5,5-dithio-bis-(2-nitrobenzoic acid) (DTNB), as well as by methyl methanethiosulfonate (MMTS) in a dose-dependent manner. Inhibited by hydrogen peroxide H(2)O(2). Alcohol dehydrogenase catalyzing the reduction of toxic aldehydes to the corresponding alcohols. Mostly active on ethanol (EtOH), but exhibits broad substrate selectivity for primary and secondary alcohols (e.g. cinnamyl alcohol, octanol, geraniol, butanol, propyl alcohol, pentanol, isopentanol, ethylene glycol, isopropanol, methanol and tertiary butyl alcohol). Also catalyzes the reverse reaction to convert allyl alcohol to highly toxic acryl-aldehyde. Required for survival and acclimation in hypoxic conditions, especially in roots. Not able to catalyze NADH-dependent degradation of S-nitrosoglutathione (GSNO). The chain is Alcohol dehydrogenase class-P from Arabidopsis thaliana (Mouse-ear cress).